The primary structure comprises 198 residues: GTP cyclohydrolase-2 (198 aa).

GTP is bound at residue 49–53; sequence RVHSE. Residues Cys-54, Cys-65, and Cys-67 each coordinate Zn(2+). Residues Gln-70, 92-94, and Thr-114 contribute to the GTP site; that span reads EGR. The Proton acceptor role is filled by Asp-126. The active-site Nucleophile is the Arg-128. 2 residues coordinate GTP: Thr-149 and Lys-154.

This sequence belongs to the GTP cyclohydrolase II family. In terms of assembly, homodimer. The cofactor is Zn(2+).

The catalysed reaction is GTP + 4 H2O = 2,5-diamino-6-hydroxy-4-(5-phosphoribosylamino)-pyrimidine + formate + 2 phosphate + 3 H(+). The protein operates within cofactor biosynthesis; riboflavin biosynthesis; 5-amino-6-(D-ribitylamino)uracil from GTP: step 1/4. Its function is as follows. Catalyzes the conversion of GTP to 2,5-diamino-6-ribosylamino-4(3H)-pyrimidinone 5'-phosphate (DARP), formate and pyrophosphate. This is GTP cyclohydrolase-2 from Escherichia fergusonii (strain ATCC 35469 / DSM 13698 / CCUG 18766 / IAM 14443 / JCM 21226 / LMG 7866 / NBRC 102419 / NCTC 12128 / CDC 0568-73).